We begin with the raw amino-acid sequence, 466 residues long: Adenosylhomocysteinase (466 aa).

Substrate contacts are provided by T57, D132, and E192. Residue 193 to 195 (TTT) coordinates NAD(+). Substrate contacts are provided by K222 and D226. Residues N227, 256–261 (GYGDVG), E279, N314, 335–337 (IGH), and N380 each bind NAD(+).

This sequence belongs to the adenosylhomocysteinase family. Requires NAD(+) as cofactor.

It is found in the cytoplasm. It catalyses the reaction S-adenosyl-L-homocysteine + H2O = L-homocysteine + adenosine. It participates in amino-acid biosynthesis; L-homocysteine biosynthesis; L-homocysteine from S-adenosyl-L-homocysteine: step 1/1. May play a key role in the regulation of the intracellular concentration of adenosylhomocysteine. The chain is Adenosylhomocysteinase from Rhizobium meliloti (strain 1021) (Ensifer meliloti).